Reading from the N-terminus, the 292-residue chain is tRNA (guanine-N(7)-)-methyltransferase (292 aa).

The segment at 1–52 is disordered; it reads MGKIEATSKEEKLRVQKEAEARRRAYRDLKKEARQMQKEVKFDTDDNSELPK. Residues G106, 129–130, 166–167, and C186 each bind S-adenosyl-L-methionine; these read EI and NA. D189 is a catalytic residue. An S-adenosyl-L-methionine-binding site is contributed by 264–266; that stretch reads TEE.

This sequence belongs to the class I-like SAM-binding methyltransferase superfamily. TrmB family. Forms a complex with TRM82.

Its subcellular location is the nucleus. The catalysed reaction is guanosine(46) in tRNA + S-adenosyl-L-methionine = N(7)-methylguanosine(46) in tRNA + S-adenosyl-L-homocysteine. It participates in tRNA modification; N(7)-methylguanine-tRNA biosynthesis. Functionally, catalyzes the formation of N(7)-methylguanine at position 46 (m7G46) in tRNA. In Debaryomyces hansenii (strain ATCC 36239 / CBS 767 / BCRC 21394 / JCM 1990 / NBRC 0083 / IGC 2968) (Yeast), this protein is tRNA (guanine-N(7)-)-methyltransferase.